The following is a 306-amino-acid chain: Agmatinase (306 aa).

6 residues coordinate Mn(2+): His126, Asp149, His151, Asp153, Asp230, and Asp232.

Belongs to the arginase family. Agmatinase subfamily. Requires Mn(2+) as cofactor.

It catalyses the reaction agmatine + H2O = urea + putrescine. It functions in the pathway amine and polyamine biosynthesis; putrescine biosynthesis via agmatine pathway; putrescine from agmatine: step 1/1. Catalyzes the formation of putrescine from agmatine. The sequence is that of Agmatinase from Escherichia coli O1:K1 / APEC.